The following is a 347-amino-acid chain: tRNA N6-adenosine threonylcarbamoyltransferase (347 aa).

Positions 111 and 115 each coordinate Fe cation. Substrate is bound by residues 134–138 (LVSGG), aspartate 167, glycine 180, and asparagine 276. Position 304 (aspartate 304) interacts with Fe cation.

Belongs to the KAE1 / TsaD family. Requires Fe(2+) as cofactor.

It is found in the cytoplasm. The enzyme catalyses L-threonylcarbamoyladenylate + adenosine(37) in tRNA = N(6)-L-threonylcarbamoyladenosine(37) in tRNA + AMP + H(+). Required for the formation of a threonylcarbamoyl group on adenosine at position 37 (t(6)A37) in tRNAs that read codons beginning with adenine. Is involved in the transfer of the threonylcarbamoyl moiety of threonylcarbamoyl-AMP (TC-AMP) to the N6 group of A37, together with TsaE and TsaB. TsaD likely plays a direct catalytic role in this reaction. The sequence is that of tRNA N6-adenosine threonylcarbamoyltransferase from Nitrosospira multiformis (strain ATCC 25196 / NCIMB 11849 / C 71).